The chain runs to 316 residues: Acetyl-coenzyme A carboxylase carboxyl transferase subunit alpha (316 aa).

One can recognise a CoA carboxyltransferase C-terminal domain in the interval 40–293 (LERRSKDALR…GETIENGFRE (254 aa)).

It belongs to the AccA family. In terms of assembly, acetyl-CoA carboxylase is a heterohexamer composed of biotin carboxyl carrier protein (AccB), biotin carboxylase (AccC) and two subunits each of ACCase subunit alpha (AccA) and ACCase subunit beta (AccD).

The protein localises to the cytoplasm. It carries out the reaction N(6)-carboxybiotinyl-L-lysyl-[protein] + acetyl-CoA = N(6)-biotinyl-L-lysyl-[protein] + malonyl-CoA. The protein operates within lipid metabolism; malonyl-CoA biosynthesis; malonyl-CoA from acetyl-CoA: step 1/1. Its function is as follows. Component of the acetyl coenzyme A carboxylase (ACC) complex. First, biotin carboxylase catalyzes the carboxylation of biotin on its carrier protein (BCCP) and then the CO(2) group is transferred by the carboxyltransferase to acetyl-CoA to form malonyl-CoA. This Chelativorans sp. (strain BNC1) protein is Acetyl-coenzyme A carboxylase carboxyl transferase subunit alpha.